Reading from the N-terminus, the 210-residue chain is Scoloptoxin SSD552 (210 aa).

The N-terminal stretch at 1 to 23 (MNILLSSTLFVLLMFQIIGSGMG) is a signal peptide.

Post-translationally, contains 3 disulfide bonds. In terms of tissue distribution, expressed by the venom gland.

The protein resides in the secreted. This is Scoloptoxin SSD552 from Scolopendra dehaani (Thai centipede).